The primary structure comprises 140 residues: uncharacterized protein (140 aa).

Positions K2–D140 constitute an N-acetyltransferase domain.

It belongs to the acetyltransferase family.

This is an uncharacterized protein from Bacillus subtilis (strain 168).